Consider the following 681-residue polypeptide: Cadmium, zinc and cobalt-transporting ATPase (681 aa).

One can recognise an HMA domain in the interval 1-66; it reads MQKYHFTGLD…LEPDMELSEQ (66 aa). The Cytoplasmic segment spans residues 1 to 72; it reads MQKYHFTGLD…LSEQVQSEAK (72 aa). 2 residues coordinate Cd(2+): Cys11 and Cys14. Co(2+) contacts are provided by Cys11 and Cys14. Zn(2+)-binding residues include Cys11 and Cys14. The chain crosses the membrane as a helical span at residues 73 to 92; it reads PSAIPLLLSVVLYLIAVATI. Over 93–102 the chain is Extracellular; it reads HFSAQNWALH. Residues 103-124 traverse the membrane as a helical segment; the sequence is LSYALLAGVYLVAGKDVFLGAL. Residues 125–131 lie on the Cytoplasmic side of the membrane; the sequence is RAIRNKQ. A helical membrane pass occupies residues 132–151; the sequence is FFDENTLMLSATIAAFGVGA. Topologically, residues 152-154 are extracellular; that stretch reads HEE. A helical transmembrane segment spans residues 155-174; that stretch reads AVSIMVFYSAGEFLQQLAIA. Over 175–308 the chain is Cytoplasmic; it reads RSKQSLHALL…ITTFARYYTP (134 aa). A helical membrane pass occupies residues 309–327; it reads AVFAIALLIALVPPLLGHG. The Extracellular portion of the chain corresponds to 328 to 332; the sequence is DFDTW. A helical transmembrane segment spans residues 333–350; that stretch reads IYRGLFALMVSCPCALVI. At 351–630 the chain is on the cytoplasmic side; sequence SVPLGYFGGV…VFKIAKKTKR (280 aa). The active-site 4-aspartylphosphate intermediate is the Asp388. Residues Asp578 and Asp582 each contribute to the Mg(2+) site. Residues 631 to 652 form a helical membrane-spanning segment; sequence IIIENIIFALAIKAMFIVLGLS. At 653–660 the chain is on the extracellular side; it reads GDASLWEA. A helical transmembrane segment spans residues 661-676; sequence VLGDVGVTLIALANSM. Topologically, residues 677 to 681 are cytoplasmic; sequence RTMRI.

It belongs to the cation transport ATPase (P-type) (TC 3.A.3) family. Type IB subfamily.

The protein resides in the cell membrane. It catalyses the reaction Zn(2+)(in) + ATP + H2O = Zn(2+)(out) + ADP + phosphate + H(+). The catalysed reaction is Cd(2+)(in) + ATP + H2O = Cd(2+)(out) + ADP + phosphate + H(+). Couples the hydrolysis of ATP with the transport of cadmium, zinc and cobalt out of the cell. The polypeptide is Cadmium, zinc and cobalt-transporting ATPase (cadA) (Helicobacter felis).